A 331-amino-acid polypeptide reads, in one-letter code: Ornithine carbamoyltransferase, catabolic (331 aa).

Residues 57–60 (STRT), glutamine 82, arginine 106, and 133–136 (HPTQ) contribute to the carbamoyl phosphate site. Residues asparagine 166, aspartate 230, and 234–235 (SM) contribute to the L-ornithine site. Residues 272-273 (CL) and arginine 317 contribute to the carbamoyl phosphate site.

This sequence belongs to the aspartate/ornithine carbamoyltransferase superfamily. OTCase family.

It is found in the cytoplasm. It carries out the reaction carbamoyl phosphate + L-ornithine = L-citrulline + phosphate + H(+). It functions in the pathway amino-acid degradation; L-arginine degradation via ADI pathway; carbamoyl phosphate from L-arginine: step 2/2. Functionally, reversibly catalyzes the transfer of the carbamoyl group from carbamoyl phosphate (CP) to the N(epsilon) atom of ornithine (ORN) to produce L-citrulline. The sequence is that of Ornithine carbamoyltransferase, catabolic (arcB) from Clostridium perfringens (strain ATCC 13124 / DSM 756 / JCM 1290 / NCIMB 6125 / NCTC 8237 / Type A).